Reading from the N-terminus, the 100-residue chain is Urease subunit gamma (100 aa).

The protein belongs to the urease gamma subunit family. Heterotrimer of UreA (gamma), UreB (beta) and UreC (alpha) subunits. Three heterotrimers associate to form the active enzyme.

It localises to the cytoplasm. It carries out the reaction urea + 2 H2O + H(+) = hydrogencarbonate + 2 NH4(+). Its pathway is nitrogen metabolism; urea degradation; CO(2) and NH(3) from urea (urease route): step 1/1. The sequence is that of Urease subunit gamma from Synechococcus sp. (strain RCC307).